The chain runs to 350 residues: Succinylglutamate desuccinylase (350 aa).

Histidine 71, glutamate 74, and histidine 169 together coordinate Zn(2+). Residue glutamate 233 is part of the active site.

The protein belongs to the AspA/AstE family. Succinylglutamate desuccinylase subfamily. Zn(2+) serves as cofactor.

The catalysed reaction is N-succinyl-L-glutamate + H2O = L-glutamate + succinate. It participates in amino-acid degradation; L-arginine degradation via AST pathway; L-glutamate and succinate from L-arginine: step 5/5. Its function is as follows. Transforms N(2)-succinylglutamate into succinate and glutamate. The chain is Succinylglutamate desuccinylase from Pseudoalteromonas atlantica (strain T6c / ATCC BAA-1087).